The sequence spans 190 residues: Segregation and condensation protein B (190 aa).

This sequence belongs to the ScpB family. Homodimer. Homodimerization may be required to stabilize the binding of ScpA to the Smc head domains. Component of a cohesin-like complex composed of ScpA, ScpB and the Smc homodimer, in which ScpA and ScpB bind to the head domain of Smc. The presence of the three proteins is required for the association of the complex with DNA.

The protein resides in the cytoplasm. Its function is as follows. Participates in chromosomal partition during cell division. May act via the formation of a condensin-like complex containing Smc and ScpA that pull DNA away from mid-cell into both cell halves. This chain is Segregation and condensation protein B, found in Bacillus thuringiensis subsp. konkukian (strain 97-27).